The following is a 736-amino-acid chain: Subtilisin-like protease SBT1.9 (736 aa).

An N-terminal signal peptide occupies residues 1 to 20 (MGMTVVIILVFSFFVAIVTA). The propeptide at 21 to 101 (ETSPYIIHMD…FTKDLPVKLH (81 aa)) is activation peptide. The Inhibitor I9 domain occupies 25–101 (YIIHMDLSAK…FTKDLPVKLH (77 aa)). In terms of domain architecture, Peptidase S8 spans 103–582 (TFSPKFIGLN…AGHVSTNKVL (480 aa)). N-linked (GlcNAc...) asparagine glycosylation occurs at N112. D133 serves as the catalytic Charge relay system. N162 carries an N-linked (GlcNAc...) asparagine glycan. Residue H205 is the Charge relay system of the active site. 3 N-linked (GlcNAc...) asparagine glycosylation sites follow: N220, N381, and N453. The PA domain maps to 367 to 441 (VQFPVTYIES…VAFIGSKHRE (75 aa)). The active-site Charge relay system is the S529. The N-linked (GlcNAc...) asparagine glycan is linked to N617.

This sequence belongs to the peptidase S8 family.

The protein localises to the secreted. The protein is Subtilisin-like protease SBT1.9 of Arabidopsis thaliana (Mouse-ear cress).